The following is a 379-amino-acid chain: Cytochrome b (379 aa).

4 consecutive transmembrane segments (helical) span residues 34 to 54, 78 to 99, 114 to 134, and 179 to 199; these read FGSL…LLAM, WLIR…YLHI, WNTG…GYVL, and FFAL…IHLT. The heme b site is built by H84 and H98. Positions 183 and 197 each coordinate heme b. H202 is an a ubiquinone binding site. A run of 4 helical transmembrane segments spans residues 227–247, 289–309, 321–341, and 348–368; these read LKDI…AFFS, LGGV…PFLH, LSQV…WIGS, and FIII…ILFP.

This sequence belongs to the cytochrome b family. The cytochrome bc1 complex contains 11 subunits: 3 respiratory subunits (MT-CYB, CYC1 and UQCRFS1), 2 core proteins (UQCRC1 and UQCRC2) and 6 low-molecular weight proteins (UQCRH/QCR6, UQCRB/QCR7, UQCRQ/QCR8, UQCR10/QCR9, UQCR11/QCR10 and a cleavage product of UQCRFS1). This cytochrome bc1 complex then forms a dimer. Heme b is required as a cofactor.

It localises to the mitochondrion inner membrane. Functionally, component of the ubiquinol-cytochrome c reductase complex (complex III or cytochrome b-c1 complex) that is part of the mitochondrial respiratory chain. The b-c1 complex mediates electron transfer from ubiquinol to cytochrome c. Contributes to the generation of a proton gradient across the mitochondrial membrane that is then used for ATP synthesis. This is Cytochrome b (MT-CYB) from Casuarius bennetti (Dwarf cassowary).